We begin with the raw amino-acid sequence, 351 residues long: Flagellar P-ring protein (351 aa).

A signal peptide spans 1-20 (MKKILFLFTASLLLHVTLQA).

Belongs to the FlgI family. The basal body constitutes a major portion of the flagellar organelle and consists of four rings (L,P,S, and M) mounted on a central rod.

Its subcellular location is the periplasm. It is found in the bacterial flagellum basal body. Functionally, assembles around the rod to form the L-ring and probably protects the motor/basal body from shearing forces during rotation. The protein is Flagellar P-ring protein of Sulfurimonas denitrificans (strain ATCC 33889 / DSM 1251) (Thiomicrospira denitrificans (strain ATCC 33889 / DSM 1251)).